Here is a 577-residue protein sequence, read N- to C-terminus: Zinc finger protein 384 (577 aa).

The disordered stretch occupies residues 171–225 (TLTEEGGGGGGGGGSVAPKPPRGRKKKRMLESGLPEMNDPYVLSPEDDDDHQKDG). Positions 175-185 (EGGGGGGGGGS) are enriched in gly residues. Residue serine 214 is modified to Phosphoserine. C2H2-type zinc fingers lie at residues 228–250 (YRCR…SKSH), 256–278 (HKCP…IRIH), 284–306 (YSCN…TRIH), 317–339 (HKCP…LRIH), 345–367 (YNCS…TRIH), 373–397 (YKCA…RRQH), 403–425 (FKCH…LSTH), and 433–455 (YTCT…MRKH). A compositionally biased stretch (low complexity) spans 501–515 (QQQQQQQQQQQQQQQ). Residues 501 to 550 (QQQQQQQQQQQQQQQQPPPHFQSPGAAPQGGGGGDSNPNPPPQCSFDLTP) form a disordered region.

This sequence belongs to the krueppel C2H2-type zinc-finger protein family. Interacts with BCAR1.

The protein localises to the nucleus. Transcription factor that binds the consensus DNA sequence [GC]AAAAA. Seems to bind and regulate the promoters of MMP1, MMP3, MMP7 and COL1A1. This is Zinc finger protein 384 (ZNF384) from Homo sapiens (Human).